The primary structure comprises 415 residues: MSYYIAPRFLDKLAVHITKNFLNLPGVRVPLILGIHGRKGEGKTFQCELAFEKMGVEVTLISGGELESPDAGDPARLIRLRYRETAELIKVRGKMCVLMINDLDAGAGRFDEGTQYTVNTQLVNATLMNIADNPTDVQLPGSYDSTPLRRVPIIVTGNDFSTLYAPLIRDGRMEKFYWEPHRDEKVGIVGGIFAEDGLSQRDVEKLVDSFPNQSIDFFSALRSRIYDEQIRDFIHQVGYENVSLRVVNSLEGPPAFKKPDFTLSHLIESANFMVAEQKRIETSQLVDEYNRLNRGRSYQPASPVAEIATSQPSPNGVNQPQSASPHISLETQEQIRQILAQGHKITFEHVDNRRFRTGSWQSCGTIHVDAESDAISTLESCLAEYRGEYVRLVGIDPKAKRRVVETIIQRPNGTN.

ATP is bound at residue 37–44; sequence GRKGEGKT.

It belongs to the RuBisCO activase family.

In terms of biological role, activation of RuBisCO (ribulose-1,5-bisohosphate carboxylase/oxygenase; EC 4.1.1.39) involves the ATP-dependent carboxylation of the epsilon-amino group of lysine leading to a carbamate structure. The chain is Ribulose bisphosphate carboxylase/oxygenase activase (rca) from Anabaena sp. (strain CA / ATCC 33047).